Reading from the N-terminus, the 1425-residue chain is Rho GTPase-activating protein 31 (1425 aa).

Residues 21-216 (CDLTEYLESS…FILNHADQIF (196 aa)) enclose the Rho-GAP domain. The disordered stretch occupies residues 258–277 (LATNHPARKERRENSLPEIV). S272 is subject to Phosphoserine. A Phosphothreonine modification is found at T283. Phosphoserine is present on residues S343, S346, S384, and S464. Over residues 511 to 522 (EEFSFQGSESGG) the composition is skewed to low complexity. 3 disordered regions span residues 511-621 (EEFS…GAGT), 652-700 (SEEE…TRDA), and 756-951 (IEIG…GNSH). 2 stretches are compositionally biased toward basic and acidic residues: residues 543-556 (AATEDTKPEPEVPG) and 587-600 (KEAEKRPKAEKVME). Residues 603-615 (QGASQPKPSTPQE) are compositionally biased toward polar residues. Phosphothreonine is present on T666. The segment covering 671 to 681 (ESSPAPFPFPE) has biased composition (pro residues). Phosphoserine is present on residues S685, S690, and S765. A compositionally biased stretch (pro residues) spans 767-777 (PLTPAPPPPTP). Residue T769 is modified to Phosphothreonine. The residue at position 776 (T776) is a Phosphothreonine; by GSK3. The span at 789 to 804 (EGPDREDAARDSRTDV) shows a compositional bias: basic and acidic residues. Residues 936–951 (LRQSHSLDSKTTGNSH) are compositionally biased toward polar residues. Phosphoserine occurs at positions 961, 1092, 1093, and 1163. The interval 1031–1095 (KEQEPQLELS…KGKHRPSSLN (65 aa)) is disordered. Polar residues-rich tracts occupy residues 1196 to 1206 (QIPQPLPSQST), 1250 to 1260 (QETGASASRRQ), and 1299 to 1308 (TEPSGDNLLS). Disordered regions lie at residues 1196-1260 (QIPQ…SRRQ) and 1291-1327 (QCRKRTSETEPSGDNLLSSKLERASGGPKAFHRSRPG).

As to quaternary structure, interacts with ITSN1, which inhibits GAP activity. Interacts with PARVA. Interacts with GTP-loaded RHOU. Post-translationally, phosphorylated on Thr-776 by GSK3; which reduces GAP activity. Expressed at highest levels in heart and lung.

Its subcellular location is the cell projection. The protein resides in the lamellipodium. The protein localises to the cell junction. It is found in the focal adhesion. Functions as a GTPase-activating protein (GAP) for RAC1 and CDC42. Required for cell spreading, polarized lamellipodia formation and cell migration. The protein is Rho GTPase-activating protein 31 (Arhgap31) of Mus musculus (Mouse).